Consider the following 63-residue polypeptide: Translational regulator CsrA (63 aa).

The protein belongs to the CsrA/RsmA family. Homodimer; the beta-strands of each monomer intercalate to form a hydrophobic core, while the alpha-helices form wings that extend away from the core.

The protein localises to the cytoplasm. A key translational regulator that binds mRNA to regulate translation initiation and/or mRNA stability. Mediates global changes in gene expression, shifting from rapid growth to stress survival by linking envelope stress, the stringent response and the catabolite repression systems. Usually binds in the 5'-UTR; binding at or near the Shine-Dalgarno sequence prevents ribosome-binding, repressing translation, binding elsewhere in the 5'-UTR can activate translation and/or stabilize the mRNA. Its function is antagonized by small RNA(s). This chain is Translational regulator CsrA, found in Alteromonas mediterranea (strain DSM 17117 / CIP 110805 / LMG 28347 / Deep ecotype).